Consider the following 200-residue polypeptide: Thymidylate kinase (200 aa).

An ATP-binding site is contributed by glycine 10 to serine 17.

This sequence belongs to the thymidylate kinase family.

The enzyme catalyses dTMP + ATP = dTDP + ADP. Phosphorylation of dTMP to form dTDP in both de novo and salvage pathways of dTTP synthesis. The polypeptide is Thymidylate kinase (Cupriavidus metallidurans (strain ATCC 43123 / DSM 2839 / NBRC 102507 / CH34) (Ralstonia metallidurans)).